A 281-amino-acid chain; its full sequence is RAD52 motif-containing protein 1 (281 aa).

The tract at residues 1-92 (MAELISFVVP…KPLFQTSPVK (92 aa)) is necessary for nuclear localization and for nucleolar accumulation in response to heat shock. One can recognise an RRM domain in the interval 15-98 (KVLLVWDLST…SPVKVRLGTR (84 aa)). The interval 90–133 (PVKVRLGTRHKALQHQAFALNSSRCQELANYYFGFSGWSKRIIK) is necessary for nuclear and nucleolar localization.

Homodimer.

It is found in the nucleus. The protein localises to the cytoplasm. Its subcellular location is the nucleolus. It localises to the cajal body. The protein resides in the PML body. In terms of biological role, may confer resistance to the antitumor agent cisplatin. Binds to DNA and RNA. The polypeptide is RAD52 motif-containing protein 1 (Rdm1) (Mus musculus (Mouse)).